The sequence spans 179 residues: Cell division protein SepF (179 aa).

Residues 22–53 are disordered; that stretch reads LPYEKRDEPVFTPVNSSQEPALPMNQPSQSVG. The segment covering 34 to 53 has biased composition (polar residues); sequence PVNSSQEPALPMNQPSQSVG.

It belongs to the SepF family. In terms of assembly, homodimer. Interacts with FtsZ.

The protein resides in the cytoplasm. Functionally, cell division protein that is part of the divisome complex and is recruited early to the Z-ring. Probably stimulates Z-ring formation, perhaps through the cross-linking of FtsZ protofilaments. Its function overlaps with FtsA. This is Cell division protein SepF from Streptococcus pneumoniae (strain P1031).